The following is a 260-amino-acid chain: Flavin-dependent thymidylate synthase (260 aa).

Residues 2–203 (ISVKLVSYTN…PRLFKYTGPN (202 aa)) enclose the ThyX domain. FAD is bound by residues Ser56, 80–82 (RHR), and Gln88. DUMP-binding positions include 77 to 80 (QLVR), 88 to 92 (QMSHR), and Arg142. The ThyX motif motif lies at 80-90 (RHRIASYTQMS). FAD-binding positions include 158-160 (NAR) and Asn164. Arg169 serves as a coordination point for dUMP. Residue Arg169 is the Involved in ionization of N3 of dUMP, leading to its activation of the active site.

The protein belongs to the thymidylate synthase ThyX family. Homotetramer. The cofactor is FAD.

It carries out the reaction dUMP + (6R)-5,10-methylene-5,6,7,8-tetrahydrofolate + NADPH + H(+) = dTMP + (6S)-5,6,7,8-tetrahydrofolate + NADP(+). It participates in pyrimidine metabolism; dTTP biosynthesis. Catalyzes the reductive methylation of 2'-deoxyuridine-5'-monophosphate (dUMP) to 2'-deoxythymidine-5'-monophosphate (dTMP) while utilizing 5,10-methylenetetrahydrofolate (mTHF) as the methyl donor, and NADPH and FADH(2) as the reductant. The polypeptide is Flavin-dependent thymidylate synthase (Saccharolobus solfataricus (strain ATCC 35092 / DSM 1617 / JCM 11322 / P2) (Sulfolobus solfataricus)).